The following is a 527-amino-acid chain: Lysine--tRNA ligase (527 aa).

A 'HIGH' region motif is present at residues 44–52; sequence PSGLPHIGT. The 'KMSKS' region signature appears at 290-294; the sequence is KISKS. Lys-293 is an ATP binding site.

The protein belongs to the class-I aminoacyl-tRNA synthetase family.

The protein localises to the cytoplasm. It catalyses the reaction tRNA(Lys) + L-lysine + ATP = L-lysyl-tRNA(Lys) + AMP + diphosphate. In Roseobacter denitrificans (strain ATCC 33942 / OCh 114) (Erythrobacter sp. (strain OCh 114)), this protein is Lysine--tRNA ligase.